The sequence spans 559 residues: Berberine bridge enzyme-like A (559 aa).

The first 21 residues, 1–21 (MFPLIILISFSLASLSETATG), serve as a signal peptide directing secretion. Residues asparagine 25 and asparagine 37 are each glycosylated (N-linked (GlcNAc...) asparagine). A disulfide bridge links cysteine 29 with cysteine 86. An FAD-binding PCMH-type domain is found at 64 to 240 (FMPKPTFIIL…YAWKIRLLKV (177 aa)). Pros-8alpha-FAD histidine is present on histidine 101. Residues asparagine 321, asparagine 355, and asparagine 494 are each glycosylated (N-linked (GlcNAc...) asparagine).

The protein belongs to the oxygen-dependent FAD-linked oxidoreductase family. Requires FAD as cofactor. As to expression, mostly expressed in roots.

Its subcellular location is the vacuole. Its pathway is alkaloid biosynthesis; nicotine biosynthesis. Functionally, involved in the biosynthesis of pyridine alkaloid natural products, leading mainly to the production of anabasine, anatabine, nicotine and nornicotine, effective deterrents against herbivores with antiparasitic and pesticide properties (neurotoxins); nornicotine serves as the precursor in the synthesis of the carcinogen compound N'-nitrosonornicotine (NNN). Catalyzes a late oxidation step subsequent to the pyridine ring condensation reaction in the biosynthesis of alkaloids. This chain is Berberine bridge enzyme-like A, found in Nicotiana tabacum (Common tobacco).